The chain runs to 199 residues: Recombination protein RecR (199 aa).

The C4-type zinc-finger motif lies at 58-73; it reads CSVCYGLADSDPCHIC. The Toprim domain occupies 81-176; it reads DVVCVVEQGT…KITRIASGVP (96 aa).

The protein belongs to the RecR family.

May play a role in DNA repair. It seems to be involved in an RecBC-independent recombinational process of DNA repair. It may act with RecF and RecO. This is Recombination protein RecR from Desulfatibacillum aliphaticivorans.